The chain runs to 365 residues: 3-dehydroquinate synthase (365 aa).

NAD(+) contacts are provided by residues 107–111 (GVIGD), 131–132 (TS), Lys144, and Lys153. Residues Glu186, His251, and His268 each contribute to the Zn(2+) site.

Belongs to the sugar phosphate cyclases superfamily. Dehydroquinate synthase family. Co(2+) serves as cofactor. The cofactor is Zn(2+). NAD(+) is required as a cofactor.

It is found in the cytoplasm. It carries out the reaction 7-phospho-2-dehydro-3-deoxy-D-arabino-heptonate = 3-dehydroquinate + phosphate. The protein operates within metabolic intermediate biosynthesis; chorismate biosynthesis; chorismate from D-erythrose 4-phosphate and phosphoenolpyruvate: step 2/7. In terms of biological role, catalyzes the conversion of 3-deoxy-D-arabino-heptulosonate 7-phosphate (DAHP) to dehydroquinate (DHQ). This is 3-dehydroquinate synthase from Crocosphaera subtropica (strain ATCC 51142 / BH68) (Cyanothece sp. (strain ATCC 51142)).